The primary structure comprises 169 residues: E1B protein, small T-antigen (169 aa).

Positions 147 to 169 are disordered; it reads GSVVEEEQGEEHLARDSDDPFFD. A compositionally biased stretch (basic and acidic residues) spans 156–169; sequence EEHLARDSDDPFFD.

It belongs to the adenoviridae E1B 19 kDa protein family.

In Canine adenovirus serotype 1 (strain Glaxo) (CAdV-1), this protein is E1B protein, small T-antigen.